A 264-amino-acid polypeptide reads, in one-letter code: Small ribosomal subunit protein mS23 (264 aa).

The interval 233 to 264 is disordered; sequence ARTSNPAGSWKDDTTLNTAQEEESTTSENLHF.

This sequence belongs to the mitochondrion-specific ribosomal protein mS23 family. As to quaternary structure, component of the mitochondrial small ribosomal subunit. Mature mitochondrial ribosomes consist of a small (37S) and a large (54S) subunit. The 37S subunit contains at least 33 different proteins and 1 molecule of RNA (15S). The 54S subunit contains at least 45 different proteins and 1 molecule of RNA (21S).

The protein resides in the mitochondrion. The polypeptide is Small ribosomal subunit protein mS23 (RSM25) (Saccharomyces cerevisiae (strain YJM789) (Baker's yeast)).